The sequence spans 366 residues: Isopropyl malate dehydrogenase htyC (366 aa).

71–73 (VGG) contributes to the NADP(+) binding site. The substrate site is built by arginine 91 and arginine 130. Residues aspartate 221, aspartate 246, and aspartate 250 each coordinate Mg(2+). 277 to 282 (GCVHGI) is a binding site for NADP(+).

Belongs to the isocitrate and isopropylmalate dehydrogenases family. In terms of assembly, homodimer. Mg(2+) serves as cofactor. The cofactor is Mn(2+).

It catalyses the reaction (2R,3S)-3-isopropylmalate + NAD(+) = 4-methyl-2-oxopentanoate + CO2 + NADH. The protein operates within antifungal biosynthesis. In terms of biological role, isopropyl malate dehydrogenase; part of the gene cluster that mediates the de novo generation of L-homotyrosine from acetyl-CoA and 4-hydroxyphenyl-pyruvate. L-homotyrosine is a building block of echinocandin B, a fungal lipidated cyclic hexapeptide that acts as an antifungal agent. L-homotyrosine 4-hydroxyphenyl-pyruvate first undergoes an aldol-type condensation by htyA with the C-2 of acetyl-CoA followed by the release of CoA to form 2-(4-hydroxybenzyl)-malate. This is followed by isomerization of 2-(4-hydroxy-benzyl)-malate to 3-(4-hydroxybenzyl)-malate by htyD. Thereafter, 3-(4-hydroxybenzyl)-malate undergoes decarboxylation and oxidation to form 2-oxo-4-(4-hydroxybenzyl)butanoic acid, coupled to reduction of NAD(+) to NADH by htyC. The product then undergoes transamination catalyzed by htyB to form L-homotyrosine. The polypeptide is Isopropyl malate dehydrogenase htyC (Aspergillus rugulosus (Emericella rugulosa)).